Here is a 322-residue protein sequence, read N- to C-terminus: RNA-binding protein KhpB (322 aa).

The interval 3–52 is jag_N domain; it reads VFEGNTVAAAIAAGLKQLHRTRDQVEVEVIAEAKKGFLGLGKHPAQVRLT. Over residues 58–82 the composition is skewed to low complexity; the sequence is AAPATTPTSATATAQQSVATESTTA. A disordered region spans residues 58 to 162; it reads AAPATTPTSA…AADQSQTPRT (105 aa). Thr89 carries the post-translational modification Phosphothreonine. Positions 89–99 are enriched in polar residues; it reads TVQTPKSTPTR. The span at 100–129 shows a compositional bias: low complexity; that stretch reads QAKTSQATTSAAKPATSKAKAVAKPASMAV. Residues 141 to 161 show a composition bias toward polar residues; it reads SKPATTSKTKSVAADQSQTPR. Residues 174-251 form the KH domain; the sequence is ETAVRALCDY…ASHVNVVLDV (78 aa). The region spanning 256–322 is the R3H domain; the sequence is ERRAATLKRL…HRAVVVAIRK (67 aa).

In terms of assembly, forms a complex with KhpA.

It is found in the cytoplasm. Functionally, a probable RNA chaperone. Forms a complex with KhpA which binds to cellular RNA and controls its expression. Plays a role in peptidoglycan (PG) homeostasis and cell length regulation. In terms of biological role, necessary for correct cell elongation. The protein is RNA-binding protein KhpB of Lactiplantibacillus plantarum (strain ATCC BAA-793 / NCIMB 8826 / WCFS1) (Lactobacillus plantarum).